A 237-amino-acid polypeptide reads, in one-letter code: Probable aquaporin SIP2-1 (237 aa).

Transmembrane regions (helical) follow at residues 15 to 35 (FMWIWAGVLVNILVHGVLGFS), 39 to 59 (PSGEIVRYLFSIISMFIFAYL), 71 to 91 (LTALAAGVSGGFSSFIFSVFV), 122 to 142 (VAIHHGALTEGILTFFIVLLS), 169 to 189 (ILGSDLTGGCMNPAAVMGWAY), and 202 to 222 (VYWLGPVKATLLAVWFFKVVF). The short motif at 69–71 (NPL) is the NPA 1 element. The NPA 2 motif lies at 180-182 (NPA).

It belongs to the MIP/aquaporin (TC 1.A.8) family. SIP (TC 1.A.8.10) subfamily. In terms of tissue distribution, expressed in dividing cells and elongating regions of the root tips, emerging lateral roots, root steles, cotyledons, main veins of the rosette leaves, vascular tissues of the flower petals, stigma, stamens (anthers and filaments), pollen and the top and bottom (receptacle) of siliques.

The protein resides in the endoplasmic reticulum membrane. In terms of biological role, water channel required to facilitate the transport of water across cell membrane. Inactive in yeast cells. This chain is Probable aquaporin SIP2-1 (SIP2-1), found in Arabidopsis thaliana (Mouse-ear cress).